Reading from the N-terminus, the 420-residue chain is Protein phosphatase methylesterase 1 (420 aa).

Low complexity-rich tracts occupy residues 18-28 (PEAPLLSESSS) and 42-51 (SSVSSTGTVI). Positions 18–51 (PEAPLLSESSSMNHPAESSHDEDSSSVSSTGTVI) are disordered. Active-site residues include Ser197, Asp223, and His354.

It belongs to the AB hydrolase superfamily.

The catalysed reaction is [phosphatase 2A protein]-C-terminal L-leucine methyl ester + H2O = [phosphatase 2A protein]-C-terminal L-leucine + methanol + H(+). Its function is as follows. Demethylates proteins that have been reversibly carboxymethylated. Demethylates the phosphatase PP2A catalytic subunit. In Aspergillus fumigatus (strain ATCC MYA-4609 / CBS 101355 / FGSC A1100 / Af293) (Neosartorya fumigata), this protein is Protein phosphatase methylesterase 1 (ppe1).